The primary structure comprises 700 residues: Elongation factor G (700 aa).

In terms of domain architecture, tr-type G spans 10–286 (TKVRNIGIMA…AVIDYLPNPL (277 aa)). Residues 19–26 (AHIDAGKT), 83–87 (DTPGH), and 137–140 (NKMD) each bind GTP.

The protein belongs to the TRAFAC class translation factor GTPase superfamily. Classic translation factor GTPase family. EF-G/EF-2 subfamily.

The protein localises to the cytoplasm. In terms of biological role, catalyzes the GTP-dependent ribosomal translocation step during translation elongation. During this step, the ribosome changes from the pre-translocational (PRE) to the post-translocational (POST) state as the newly formed A-site-bound peptidyl-tRNA and P-site-bound deacylated tRNA move to the P and E sites, respectively. Catalyzes the coordinated movement of the two tRNA molecules, the mRNA and conformational changes in the ribosome. In Mycolicibacterium vanbaalenii (strain DSM 7251 / JCM 13017 / BCRC 16820 / KCTC 9966 / NRRL B-24157 / PYR-1) (Mycobacterium vanbaalenii), this protein is Elongation factor G.